The primary structure comprises 388 residues: T-cell surface glycoprotein CD1e, membrane-associated (388 aa).

The signal sequence occupies residues 1 to 19 (MLLLFLLFEGLCCPGENTA). Residues 20–31 (APQALQSYHLAA) constitute a propeptide, removed in sCD1e. N-linked (GlcNAc...) asparagine glycosylation is found at Asn-47 and Asn-84. In terms of domain architecture, Ig-like spans 191 to 301 (PRFLAGLMEA…LGGHDLIIHW (111 aa)). The cysteines at positions 230 and 285 are disulfide-linked. Residues 305 to 325 (SIFLILICLTVIVTLVILVVV) form a helical membrane-spanning segment.

As to quaternary structure, heterodimer with B2M (beta-2-microglobulin). The association with B2M appears to be facilitated by the presence of the propeptide. Post-translationally, mono-ubiquitinated. In terms of processing, proteolytically cleaved in late endosomes to yield a soluble form. In terms of tissue distribution, expressed on cortical thymocytes, dendritic cells, Langerhans cells, on certain T-cell leukemias, and in various other tissues.

It is found in the golgi apparatus membrane. It localises to the early endosome. The protein resides in the late endosome. The protein localises to the lysosome lumen. Functionally, T-cell surface glycoprotein CD1e, soluble binds diacetylated lipids, including phosphatidyl inositides and diacylated sulfoglycolipids, and is required for the presentation of glycolipid antigens on the cell surface. The membrane-associated form is not active. The polypeptide is T-cell surface glycoprotein CD1e, membrane-associated (CD1E) (Homo sapiens (Human)).